Consider the following 599-residue polypeptide: MSTGFSFGSGTLGSTTVAAGGTSTGGVFSFGTGASSNPSVGLNFGNLGSTSTPATTSAPSSGFGTGLFGSKPATGFTLGGTNTGIATTITTGLTLGTPATTSAATTGFSLGFNKPAASATPFALPITSTSASGLTLSSALTSTPAASTGFTLNNLGGTTATTTTASTGLSLGGALAGLGGSLFQSTNTGTSGLGQNALGLTLGTTAATSTAGNEGLGGIDFSSSSDKKSDKTGTRPEDSKALKDENLPPVICQDVENLQKFVKEQKQVQEEISRMSSKAMLKVQEDIKALKQLLSLAANGIQRNTLNIDKLKIETAQELKNAEIALRTQKTPPGLQHEYAAPADYFRILVQQFEVQLQQYRQQIEELENHLATQANNSHITPQDLSMAMQKIYQTFVALAAQLQSIHENVKVLKEQYLGYRKMFLGDAVDVFETRRAEAKKWQNTPRVTTGPTPFSTMPNAAAVAMAATLTQQQQPATGPQPSLGVSFGTPFGSGIGTGLQSSGLGSSNLGGFGTSSGFGCSTTGASTFGFGTTNKPSGSLSAGFGSSSTSGFNFSNPGITASAGLTFGVSNPASAGFGTGGQLLQLKKPPAGNKRGKR.

5 repeat units span residues 7–8, 30–31, 44–45, 63–64, and 68–69. Residues 7–579 form a 14 X 2 AA repeats of F-G region; sequence FGSGTLGSTT…VSNPASAGFG (573 aa). Positions 213–247 are disordered; sequence NEGLGGIDFSSSSDKKSDKTGTRPEDSKALKDENL. Residues 225-246 show a composition bias toward basic and acidic residues; that stretch reads SDKKSDKTGTRPEDSKALKDEN. 2 coiled-coil regions span residues 256-276 and 314-381; these read ENLQ…SRMS and ETAQ…SHIT. T331 is subject to Phosphothreonine. Repeat copies occupy residues 488–489, 492–493, 513–514, 519–520, 529–530, 531–532, 545–546, 568–569, and 578–579. The tract at residues 579–599 is disordered; the sequence is GTGGQLLQLKKPPAGNKRGKR.

The protein belongs to the NUP58 family. In terms of assembly, component of the p62 complex, a complex at least composed of NUP62, NUP54, and NUP58. Interacts with NUTF2. Interacts with SRP1-alpha and Importin p97 proteins when they are together, but not with SRP1-alpha protein alone. Post-translationally, O-glycosylated.

Its subcellular location is the nucleus. It is found in the nuclear pore complex. The protein resides in the nucleus membrane. Component of the nuclear pore complex, a complex required for the trafficking across the nuclear membrane. This is Nucleoporin p58/p45 from Homo sapiens (Human).